The primary structure comprises 147 residues: Hemoglobin subunit epsilon (147 aa).

The 145-residue stretch at 3 to 147 folds into the Globin domain; sequence HFTAEEKAAI…VAIALGHKYH (145 aa). Phosphoserine is present on residues S14 and S51. Residues H64 and H93 each contribute to the heme b site.

It belongs to the globin family. Heterotetramer of two alpha chains and two epsilon chains in early embryonic hemoglobin Gower-2; two zeta chains and two epsilon chains in early embryonic hemoglobin Gower-1. As to expression, red blood cells.

Its function is as follows. The epsilon chain is a beta-type chain of early mammalian embryonic hemoglobin. This is Hemoglobin subunit epsilon (HBE1) from Pithecia irrorata (Gray monk saki).